Reading from the N-terminus, the 247-residue chain is 2,3-bisphosphoglycerate-dependent phosphoglycerate mutase (247 aa).

Substrate-binding positions include Arg7–Asn14, Thr20–Gly21, Arg59, Glu86–Tyr89, Lys97, Arg113–Arg114, and Gly182–Asn183. His8 serves as the catalytic Tele-phosphohistidine intermediate. Glu86 serves as the catalytic Proton donor/acceptor.

It belongs to the phosphoglycerate mutase family. BPG-dependent PGAM subfamily.

It catalyses the reaction (2R)-2-phosphoglycerate = (2R)-3-phosphoglycerate. The protein operates within carbohydrate degradation; glycolysis; pyruvate from D-glyceraldehyde 3-phosphate: step 3/5. Functionally, catalyzes the interconversion of 2-phosphoglycerate and 3-phosphoglycerate. In Treponema denticola (strain ATCC 35405 / DSM 14222 / CIP 103919 / JCM 8153 / KCTC 15104), this protein is 2,3-bisphosphoglycerate-dependent phosphoglycerate mutase.